A 267-amino-acid polypeptide reads, in one-letter code: tRNA pseudouridine synthase A (267 aa).

Residue aspartate 52 is the Nucleophile of the active site. Tyrosine 113 contacts substrate.

This sequence belongs to the tRNA pseudouridine synthase TruA family. In terms of assembly, homodimer.

It carries out the reaction uridine(38/39/40) in tRNA = pseudouridine(38/39/40) in tRNA. Functionally, formation of pseudouridine at positions 38, 39 and 40 in the anticodon stem and loop of transfer RNAs. The sequence is that of tRNA pseudouridine synthase A from Chlamydia pneumoniae (Chlamydophila pneumoniae).